The chain runs to 103 residues: Defensin-like protein 268 (103 aa).

An N-terminal signal peptide occupies residues 1–24 (MARLIFHFVFALILAAYLLSVTDA). Disulfide bonds link Cys44–Cys103, Cys68–Cys87, Cys74–Cys98, and Cys78–Cys100.

It belongs to the DEFL family.

Its subcellular location is the secreted. The polypeptide is Defensin-like protein 268 (Arabidopsis thaliana (Mouse-ear cress)).